The sequence spans 165 residues: Choriogonadotropin subunit beta (165 aa).

Residues 1-20 (METLQGLLLWLLLSMGGAQA) form the signal peptide. 6 cysteine pairs are disulfide-bonded: C29-C77, C43-C92, C46-C130, C54-C108, C58-C110, and C113-C120. N-linked (GlcNAc...) asparagine glycosylation is found at N33 and N50. A disordered region spans residues 131-165 (DDPNLQASSSSKDPPPSPPSPSRLLEPAGTPFLPQ). O-linked (GalNAc...) serine glycosylation is found at S141, S147, and S152.

This sequence belongs to the glycoprotein hormones subunit beta family. In terms of assembly, heterodimer of a common alpha chain and a unique beta chain which confers biological specificity to thyrotropin, lutropin, follitropin and gonadotropin. Placenta.

The protein resides in the secreted. Functionally, stimulates the ovaries to synthesize the steroids that are essential for the maintenance of pregnancy. This is Choriogonadotropin subunit beta (CGB) from Papio anubis (Olive baboon).